Reading from the N-terminus, the 329-residue chain is MQFIDQARITVRGGRGGDGIAAFRREKYVPAGGPSGGDGGCGAPVVLEADSNLQTLLDFKYKRLFAADDGRRGGPNKCTGASGKDLVIKVPCGTEVRHLRTGILLGDLTAPGERLTVAFGGRGGLGNAHYLSNRNRAPEKFTEGREGEEWPLQLELKLLAEVGIIGLPNAGKSTLIAVLSAARPKIADYPFTTLVPNLGVVRRPSGDGTVFADIPGLIEGAAQGSGLGHDFLRHIERTRLLIHLVDAGSEDPVADLNVVQQELEAYGHGLVDRPRLLVINKQELVSEDDLPKLQQELKEASGRPVLCISAAMGTNLDQLLAETWVELGV.

The region spanning 1–159 (MQFIDQARIT…WPLQLELKLL (159 aa)) is the Obg domain. The OBG-type G domain maps to 160-328 (AEVGIIGLPN…LLAETWVELG (169 aa)). ATP is bound by residues 166 to 173 (GLPNAGKS), 191 to 195 (FTTLV), 213 to 216 (DIPG), 280 to 283 (NKQE), and 309 to 311 (SAA). Residues serine 173 and threonine 193 each coordinate Mg(2+).

Belongs to the TRAFAC class OBG-HflX-like GTPase superfamily. OBG GTPase family. As to quaternary structure, monomer. It depends on Mg(2+) as a cofactor.

It localises to the cytoplasm. Its function is as follows. An essential GTPase which binds GTP, GDP and possibly (p)ppGpp with moderate affinity, with high nucleotide exchange rates and a fairly low GTP hydrolysis rate. Plays a role in control of the cell cycle, stress response, ribosome biogenesis and in those bacteria that undergo differentiation, in morphogenesis control. This chain is GTPase Obg, found in Synechococcus sp. (strain CC9605).